The primary structure comprises 396 residues: S-adenosylmethionine synthase (396 aa).

His16 lines the ATP pocket. Asp18 serves as a coordination point for Mg(2+). Glu44 contributes to the K(+) binding site. Positions 57 and 100 each coordinate L-methionine. The tract at residues 100–110 (QSVDIAQGVDR) is flexible loop. Residues 165-167 (DAK), Asp240, 246-247 (RK), Ala263, and Lys267 contribute to the ATP site. Asp240 is an L-methionine binding site. Lys271 serves as a coordination point for L-methionine.

This sequence belongs to the AdoMet synthase family. In terms of assembly, homotetramer; dimer of dimers. Mg(2+) is required as a cofactor. It depends on K(+) as a cofactor.

The protein resides in the cytoplasm. The enzyme catalyses L-methionine + ATP + H2O = S-adenosyl-L-methionine + phosphate + diphosphate. Its pathway is amino-acid biosynthesis; S-adenosyl-L-methionine biosynthesis; S-adenosyl-L-methionine from L-methionine: step 1/1. Functionally, catalyzes the formation of S-adenosylmethionine (AdoMet) from methionine and ATP. The overall synthetic reaction is composed of two sequential steps, AdoMet formation and the subsequent tripolyphosphate hydrolysis which occurs prior to release of AdoMet from the enzyme. In Pseudomonas putida (strain W619), this protein is S-adenosylmethionine synthase.